The sequence spans 326 residues: Ketol-acid reductoisomerase (NADP(+)) (326 aa).

Positions 2 to 182 (AKIYGDEDAS…GFTRAGVIKT (181 aa)) constitute a KARI N-terminal Rossmann domain. NADP(+) is bound by residues 25-28 (YGSQ), arginine 48, serine 53, and 83-86 (DEVQ). Histidine 108 is a catalytic residue. Position 134 (glycine 134) interacts with NADP(+). Residues 183-325 (TFREEVETDL…ERLRKMMGFE (143 aa)) enclose the KARI C-terminal knotted domain. 4 residues coordinate Mg(2+): aspartate 191, glutamate 195, glutamate 227, and glutamate 231. Residue serine 252 participates in substrate binding.

This sequence belongs to the ketol-acid reductoisomerase family. It depends on Mg(2+) as a cofactor.

It catalyses the reaction (2R)-2,3-dihydroxy-3-methylbutanoate + NADP(+) = (2S)-2-acetolactate + NADPH + H(+). The catalysed reaction is (2R,3R)-2,3-dihydroxy-3-methylpentanoate + NADP(+) = (S)-2-ethyl-2-hydroxy-3-oxobutanoate + NADPH + H(+). It functions in the pathway amino-acid biosynthesis; L-isoleucine biosynthesis; L-isoleucine from 2-oxobutanoate: step 2/4. It participates in amino-acid biosynthesis; L-valine biosynthesis; L-valine from pyruvate: step 2/4. Its function is as follows. Involved in the biosynthesis of branched-chain amino acids (BCAA). Catalyzes an alkyl-migration followed by a ketol-acid reduction of (S)-2-acetolactate (S2AL) to yield (R)-2,3-dihydroxy-isovalerate. In the isomerase reaction, S2AL is rearranged via a Mg-dependent methyl migration to produce 3-hydroxy-3-methyl-2-ketobutyrate (HMKB). In the reductase reaction, this 2-ketoacid undergoes a metal-dependent reduction by NADPH to yield (R)-2,3-dihydroxy-isovalerate. The polypeptide is Ketol-acid reductoisomerase (NADP(+)) (Methanopyrus kandleri (strain AV19 / DSM 6324 / JCM 9639 / NBRC 100938)).